Reading from the N-terminus, the 207-residue chain is Glycerol-3-phosphate acyltransferase (207 aa).

5 helical membrane-spanning segments follow: residues 4-24, 58-78, 86-106, 120-140, and 162-182; these read VVATVVFAVAAYLIGSVSFAV, ILTLLGDAAKGWLAVWLAQLL, DMGIALVVIAAFLGHLYPVFH, ILLALSGWLGLATLATWLIIA, and VLLFGIDPLAGAIAVMSVLLI.

This sequence belongs to the PlsY family. As to quaternary structure, probably interacts with PlsX.

The protein resides in the cell inner membrane. It catalyses the reaction an acyl phosphate + sn-glycerol 3-phosphate = a 1-acyl-sn-glycero-3-phosphate + phosphate. It functions in the pathway lipid metabolism; phospholipid metabolism. Its function is as follows. Catalyzes the transfer of an acyl group from acyl-phosphate (acyl-PO(4)) to glycerol-3-phosphate (G3P) to form lysophosphatidic acid (LPA). This enzyme utilizes acyl-phosphate as fatty acyl donor, but not acyl-CoA or acyl-ACP. The sequence is that of Glycerol-3-phosphate acyltransferase from Ralstonia nicotianae (strain ATCC BAA-1114 / GMI1000) (Ralstonia solanacearum).